We begin with the raw amino-acid sequence, 589 residues long: Guanylate-binding protein 1 (589 aa).

Residues 1-309 are GTPase domain (Globular); the sequence is MASEIHMSEP…SAICSGELPC (309 aa). The GB1/RHD3-type G domain maps to 35–276; that stretch reads TQPVVVVAIV…FTSYIFSYSG (242 aa). Residues 47-53, 67-69, and 97-101 contribute to the GTP site; these read YRTGKSY, LGS, and DTEGL. Phosphoserine is present on serine 156. Cysteine 586 bears the Cysteine methyl ester mark. Cysteine 586 is lipidated: S-farnesyl cysteine. Residue cysteine 586 is the site of S-geranylgeranyl cysteine; partial attachment. Threonine 587 is modified (phosphothreonine). Residues 587–589 constitute a propeptide, removed in mature form; it reads TIL.

It belongs to the TRAFAC class dynamin-like GTPase superfamily. GB1/RHD3 GTPase family. GB1 subfamily. In terms of assembly, homodimer; homodimerization occurs upon GTP-binding and is required for the second hydrolysis step from GDP to GMP. Undergoes conformational changes and oligomerization upon GTP-binding and hydrolysis. Heterodimer with other family members, including GBP2, GBP3, GBP4 and GBP5. Dimerization regulates subcellular location to membranous structures. Interacts with SQSTM1. Interacts (when phosphorylated) with 14-3-3 protein sigma (SFN); leading to GBP1 retention in the cytosol and inactivation. In terms of processing, isoprenylation of mouse GBP1 is incomplete. It persistently exists in the cell as a mixture of C20-modified and (more predominantly) unmodified form. Isoprenylation is required for proper subcellular location. Phosphorylated at Ser-156 by PIM1 in absence of infection, inhibits GBP1: phosphorylation promotes interaction with 14-3-3 protein sigma (SFN), leading to GBP1 retention in the cytosol. Dephosphorylated in response to infection, liberating GBP1.

The protein localises to the cytoplasmic vesicle membrane. Its subcellular location is the golgi apparatus membrane. The protein resides in the cell membrane. It is found in the cytoplasm. It localises to the cytosol. The protein localises to the secreted. It carries out the reaction GTP + H2O = GDP + phosphate + H(+). The catalysed reaction is GDP + H2O = GMP + phosphate + H(+). Interferon (IFN)-inducible GTPase that plays important roles in innate immunity against a diverse range of bacterial, viral and protozoan pathogens. Hydrolyzes GTP to GMP in two consecutive cleavage reactions: GTP is first hydrolyzed to GDP and then to GMP in a processive manner. Following infection, recruited to the pathogen-containing vacuoles or vacuole-escaped bacteria and promotes both inflammasome assembly and autophagy. Acts as a positive regulator of inflammasome assembly by facilitating the detection of inflammasome ligands from pathogens. Involved in the lysis of pathogen-containing vacuoles, releasing pathogens into the cytosol. Following pathogen release in the cytosol, forms a protein coat in a GTPase-dependent manner that encapsulates pathogens and promotes the detection of ligands by pattern recognition receptors. Plays a key role in inflammasome assembly in response to infection by Gram-negative bacteria: following pathogen release in the cytosol, forms a protein coat that encapsulates Gram-negative bacteria and directly binds to lipopolysaccharide (LPS), disrupting the O-antigen barrier and unmasking lipid A that is that detected by the non-canonical inflammasome effector CASP4/CASP11. Also promotes recruitment of proteins that mediate bacterial cytolysis, leading to release double-stranded DNA (dsDNA) that activates the AIM2 inflammasome. Involved in autophagy by regulating bacteriolytic peptide generation via its interaction with ubiquitin-binding protein SQSTM1, which delivers monoubiquitinated proteins to autolysosomes for the generation of bacteriolytic peptides. Confers protection to several pathogens, including the bacterial pathogens L.monocytogenes and M.bovis BCG as well as the protozoan pathogen T.gondii. Exhibits antiviral activity against influenza virus. This chain is Guanylate-binding protein 1 (Gbp1), found in Mus musculus (Mouse).